Reading from the N-terminus, the 219-residue chain is Ribose-5-phosphate isomerase A (219 aa).

Substrate-binding positions include 28–31, 81–84, and 94–97; these read TGST, DGAD, and KGGG. Residue glutamate 103 is the Proton acceptor of the active site. A substrate-binding site is contributed by lysine 121.

This sequence belongs to the ribose 5-phosphate isomerase family. As to quaternary structure, homodimer.

It catalyses the reaction aldehydo-D-ribose 5-phosphate = D-ribulose 5-phosphate. The protein operates within carbohydrate degradation; pentose phosphate pathway; D-ribose 5-phosphate from D-ribulose 5-phosphate (non-oxidative stage): step 1/1. Its function is as follows. Catalyzes the reversible conversion of ribose-5-phosphate to ribulose 5-phosphate. This is Ribose-5-phosphate isomerase A from Escherichia fergusonii (strain ATCC 35469 / DSM 13698 / CCUG 18766 / IAM 14443 / JCM 21226 / LMG 7866 / NBRC 102419 / NCTC 12128 / CDC 0568-73).